Here is a 396-residue protein sequence, read N- to C-terminus: Multidrug efflux protein YfmO (396 aa).

12 consecutive transmembrane segments (helical) span residues 20–40, 56–76, 80–100, 114–134, 142–162, 171–191, 214–234, 249–269, 278–298, 301–321, 339–359, and 364–384; these read VWAVAFACVISFMGIGLVDPI, SLLFTSYLLVTGFMMFFSGAI, IGAKWTLILGLIFIIVFAGLG, GGWGLGNALFISTALAVIVGV, AIILYEAALGLGISVGPLAGG, APFFGVSVLMFIALIAISFML, GLLTMAVSAFLYNFGFFILLA, YVFFGWGLLLAITSVFTAPLV, SLVVLFIAFAAILVIMGIWTD, TLIITCIVVAGAVLGMVNTIM, AYSSVRFIGGALAPWIAGMLS, and ASTPYTVGGIVVFVGMLVLLM.

This sequence belongs to the major facilitator superfamily.

The protein resides in the cell membrane. Its function is as follows. Acts to efflux copper or a copper complex. It is possible that YfmO could contribute to copper resistance. The polypeptide is Multidrug efflux protein YfmO (yfmO) (Bacillus subtilis (strain 168)).